We begin with the raw amino-acid sequence, 86 residues long: Large ribosomal subunit protein bL35m (86 aa).

A mitochondrion-targeting transit peptide spans 1 to 18; that stretch reads MLVVFQRVVRATVLVGRK. The disordered stretch occupies residues 45–69; sequence RKHAGAQHLNRDTSSSTRARQRQWE.

Belongs to the bacterial ribosomal protein bL35 family. In terms of assembly, component of the mitochondrial large ribosomal subunit (mt-LSU). Mature yeast 74S mitochondrial ribosomes consist of a small (37S) and a large (54S) subunit. The 37S small subunit contains a 15S ribosomal RNA (15S mt-rRNA) and at least 32 different proteins. The 54S large subunit contains a 21S rRNA (21S mt-rRNA) and at least 45 different proteins.

Its subcellular location is the mitochondrion. Component of the mitochondrial ribosome (mitoribosome), a dedicated translation machinery responsible for the synthesis of mitochondrial genome-encoded proteins, including at least some of the essential transmembrane subunits of the mitochondrial respiratory chain. The mitoribosomes are attached to the mitochondrial inner membrane and translation products are cotranslationally integrated into the membrane. The polypeptide is Large ribosomal subunit protein bL35m (new15) (Schizosaccharomyces pombe (strain 972 / ATCC 24843) (Fission yeast)).